We begin with the raw amino-acid sequence, 346 residues long: MVTGNTKAETFYSMKELLKETGGYAIIDGGLATELERHGADLNDPLWSAKCLLTSPHLIHTVHLDYLEAGADIISSASYQATIQGFEAKGYSIEKSESLLRKSVEIACEARSTYYDKCKDDDDKKILKKRPILVAASVGSYGAFLADGSEYSGIYGDLITLETLKDFHRRRVQVLAESGADIIAFETIPNKLEAQAFAELLDEGVAKIPGWFSFNSKDGVNVVSGDSIKECIAIAEACEKVVAVGINCTPPRFIEGLVLEIAKVTSKPILVYPNSGERYDPERKEWVENTGVGNEDFVSYVEKWMDAGVSLLGGCCRTTPTTIRAIHKRLVSRRSLFSSSSSSSHH.

A Hcy-binding domain is found at 13–330 (SMKELLKETG…TTIRAIHKRL (318 aa)). 3 residues coordinate Zn(2+): cysteine 248, cysteine 315, and cysteine 316.

It depends on Zn(2+) as a cofactor. In terms of tissue distribution, expressed in roots, young leaves and florets, but not detected in plants not exposed to selenium.

The enzyme catalyses S-methyl-L-methionine + L-selenocysteine = Se-methyl-L-selenocysteine + L-methionine + H(+). Inhibited by L-methionine. Its function is as follows. Catalyzes the methylation of DL- and L-selenocysteine with S-methylmethionine as donor. Also methylates DL-homocysteine, DL- and L-cysteine in vitro. May be involved in selenium detoxification. This Brassica oleracea var. italica (Broccoli) protein is Selenocysteine Se-methyltransferase (SMT).